Reading from the N-terminus, the 462-residue chain is tRNA modification GTPase MnmE (462 aa).

Arg27, Glu89, and Arg128 together coordinate (6S)-5-formyl-5,6,7,8-tetrahydrofolate. The region spanning 224–383 is the TrmE-type G domain; sequence GLATAIVGRP…LDERIAKLFF (160 aa). A K(+)-binding site is contributed by Asn234. GTP-binding positions include 234–239, 253–259, and 278–281; these read NVGKSS, TDVAGTT, and DTAG. A Mg(2+)-binding site is contributed by Ser238. Positions 253, 255, and 258 each coordinate K(+). Thr259 serves as a coordination point for Mg(2+). Lys462 serves as a coordination point for (6S)-5-formyl-5,6,7,8-tetrahydrofolate.

This sequence belongs to the TRAFAC class TrmE-Era-EngA-EngB-Septin-like GTPase superfamily. TrmE GTPase family. In terms of assembly, homodimer. Heterotetramer of two MnmE and two MnmG subunits. The cofactor is K(+).

It is found in the cytoplasm. Exhibits a very high intrinsic GTPase hydrolysis rate. Involved in the addition of a carboxymethylaminomethyl (cmnm) group at the wobble position (U34) of certain tRNAs, forming tRNA-cmnm(5)s(2)U34. This is tRNA modification GTPase MnmE from Lacticaseibacillus paracasei (strain ATCC 334 / BCRC 17002 / CCUG 31169 / CIP 107868 / KCTC 3260 / NRRL B-441) (Lactobacillus paracasei).